Reading from the N-terminus, the 214-residue chain is Killer cell lectin-like receptor subfamily B member 1 (214 aa).

Residues 1 to 42 are Cytoplasmic-facing; sequence MDAPVLYAELHLANTQGLRCTSPPSPRQDACWGSGWHRVALK. A helical; Signal-anchor for type II membrane protein membrane pass occupies residues 43 to 63; the sequence is LGCVGLILLLMGLSVLVGFLV. Over 64-214 the chain is Extracellular; that stretch reads QKPPIEKCSV…WICQKTLKRV (151 aa). The 111-residue stretch at 98–208 folds into the C-type lectin domain; that stretch reads HWNKCLFISQ…CSSDNHWICQ (111 aa). Cystine bridges form between cysteine 119–cysteine 207 and cysteine 186–cysteine 199.

The protein resides in the membrane. In Rattus norvegicus (Rat), this protein is Killer cell lectin-like receptor subfamily B member 1 (Klrb1).